We begin with the raw amino-acid sequence, 174 residues long: Crossover junction endodeoxyribonuclease RuvC (174 aa).

Residues aspartate 16, glutamate 76, and aspartate 148 contribute to the active site. The Mg(2+) site is built by aspartate 16, glutamate 76, and aspartate 148.

It belongs to the RuvC family. As to quaternary structure, homodimer which binds Holliday junction (HJ) DNA. The HJ becomes 2-fold symmetrical on binding to RuvC with unstacked arms; it has a different conformation from HJ DNA in complex with RuvA. In the full resolvosome a probable DNA-RuvA(4)-RuvB(12)-RuvC(2) complex forms which resolves the HJ. Mg(2+) is required as a cofactor.

Its subcellular location is the cytoplasm. The enzyme catalyses Endonucleolytic cleavage at a junction such as a reciprocal single-stranded crossover between two homologous DNA duplexes (Holliday junction).. In terms of biological role, the RuvA-RuvB-RuvC complex processes Holliday junction (HJ) DNA during genetic recombination and DNA repair. Endonuclease that resolves HJ intermediates. Cleaves cruciform DNA by making single-stranded nicks across the HJ at symmetrical positions within the homologous arms, yielding a 5'-phosphate and a 3'-hydroxyl group; requires a central core of homology in the junction. The consensus cleavage sequence is 5'-(A/T)TT(C/G)-3'. Cleavage occurs on the 3'-side of the TT dinucleotide at the point of strand exchange. HJ branch migration catalyzed by RuvA-RuvB allows RuvC to scan DNA until it finds its consensus sequence, where it cleaves and resolves the cruciform DNA. The protein is Crossover junction endodeoxyribonuclease RuvC of Rhodopseudomonas palustris (strain ATCC BAA-98 / CGA009).